Reading from the N-terminus, the 251-residue chain is B3 domain-containing protein REM7 (251 aa).

2 consecutive DNA-binding regions (TF-B3) follow at residues 11–103 and 170–251; these read NSHF…LGPS and CFVA…SRLN.

It localises to the nucleus. The chain is B3 domain-containing protein REM7 (REM7) from Arabidopsis thaliana (Mouse-ear cress).